The chain runs to 84 residues: U7-ctenitoxin-Pn1a (84 aa).

The signal sequence occupies residues 1–17; that stretch reads MKLCILLVVLLITVVRA. A propeptide spanning residues 18–38 is cleaved from the precursor; sequence EEDILENEAEDISPAIKERSA. 4 disulfide bridges follow: cysteine 41–cysteine 56, cysteine 48–cysteine 61, cysteine 55–cysteine 78, and cysteine 63–cysteine 76.

Expressed by the venom gland.

The protein localises to the secreted. Antagonist of L-type calcium channels (Cav1/CACNA1). Causes paralysis in the posterior limbs and gradual decreases in movement and aggression during 24 hours at dose levels of 5 ug per mouse. The chain is U7-ctenitoxin-Pn1a from Phoneutria nigriventer (Brazilian armed spider).